The sequence spans 616 residues: Chaperone protein HtpG (616 aa).

Positions 1 to 334 (MAEKQIHTFQ…TADLPLNVSR (334 aa)) are a; substrate-binding. The tract at residues 335–549 (EILQGNKVVD…ENEMGGNMER (215 aa)) is b. Residues 550-616 (IMKSLGQDVP…FVKRINKLIN (67 aa)) are c.

It belongs to the heat shock protein 90 family. As to quaternary structure, homodimer.

It localises to the cytoplasm. Molecular chaperone. Has ATPase activity. The sequence is that of Chaperone protein HtpG from Ruthia magnifica subsp. Calyptogena magnifica.